Here is a 333-residue protein sequence, read N- to C-terminus: Electron transfer flavoprotein subunit alpha, mitochondrial (333 aa).

A mitochondrion-targeting transit peptide spans 1 to 19; the sequence is MFRAAAPGQLRRATSLLRF. A domain I region spans residues 20–204; the sequence is QSTLVIAEHA…GISEWLDQKL (185 aa). Lys-59 is modified (N6-acetyllysine; alternate). Lys-59 carries the post-translational modification N6-succinyllysine; alternate. N6-acetyllysine is present on Lys-62. Position 69 is an N6-acetyllysine; alternate (Lys-69). An N6-succinyllysine; alternate modification is found at Lys-69. Position 75 is an N6-acetyllysine (Lys-75). The residue at position 85 (Lys-85) is an N6-acetyllysine; alternate. Lys-85 is subject to N6-succinyllysine; alternate. The residue at position 93 (Thr-93) is a Phosphothreonine. 2 positions are modified to N6-acetyllysine: Lys-101 and Lys-139. Ser-140 carries the phosphoserine modification. An N6-acetyllysine; alternate modification is found at Lys-158. Position 158 is an N6-succinyllysine; alternate (Lys-158). Residue Lys-164 is modified to N6-acetyllysine. An N6-succinyllysine modification is found at Lys-187. Position 203 is an N6-acetyllysine; alternate (Lys-203). Lys-203 is subject to N6-succinyllysine; alternate. Residues 205-333 form a domain II region; sequence TKSDRPELTG…PEMTELLKKK (129 aa). At Lys-216 the chain carries N6-succinyllysine. Arg-223 contributes to the FAD binding site. Lys-226 and Lys-232 each carry N6-acetyllysine; alternate. N6-succinyllysine; alternate occurs at positions 226 and 232. FAD contacts are provided by residues Ser-248, 263-266, 281-286, and Asn-300; these read VGQT and SGAIQH. The residue at position 301 (Lys-301) is an N6-succinyllysine. Position 318–319 (318–319) interacts with FAD; sequence DL.

Belongs to the ETF alpha-subunit/FixB family. In terms of assembly, heterodimer composed of ETFA and ETFB. Identified in a complex that contains ETFA, ETFB and ETFRF1. Interaction with ETFRF1 promotes dissociation of the bound FAD and loss of electron transfer activity. Interacts with TASOR. FAD serves as cofactor.

The protein localises to the mitochondrion matrix. Heterodimeric electron transfer flavoprotein that accepts electrons from several mitochondrial dehydrogenases, including acyl-CoA dehydrogenases, glutaryl-CoA and sarcosine dehydrogenase. It transfers the electrons to the main mitochondrial respiratory chain via ETF-ubiquinone oxidoreductase (ETF dehydrogenase). Required for normal mitochondrial fatty acid oxidation and normal amino acid metabolism. This Bos taurus (Bovine) protein is Electron transfer flavoprotein subunit alpha, mitochondrial (ETFA).